A 299-amino-acid chain; its full sequence is Probable lipid kinase YegS (299 aa).

The region spanning 2 to 133 (ANFPASLLIL…IDMARVNDKT (132 aa)) is the DAGKc domain. ATP-binding positions include T40, 66 to 72 (GDGTINE), and T95. 3 residues coordinate Mg(2+): L215, D218, and L220. E271 functions as the Proton acceptor in the catalytic mechanism.

The protein belongs to the diacylglycerol/lipid kinase family. YegS lipid kinase subfamily. Mg(2+) is required as a cofactor. It depends on Ca(2+) as a cofactor.

It is found in the cytoplasm. Its function is as follows. Probably phosphorylates lipids; the in vivo substrate is unknown. This Salmonella agona (strain SL483) protein is Probable lipid kinase YegS.